The sequence spans 52 residues: Protein RepA (52 aa).

A DNA-binding region (H-T-H motif) is located at residues 20–40 (KLEELAQKYGMTKSGLVNFLV).

This sequence belongs to the transcriptional regulatory CopG/NikR family. Homodimer.

Functionally, regulates the plasmid copy number. RepA binds to the repAB promoter thus controlling the synthesis of the plasmid replication initiator protein RepB. This is Protein RepA (repA) from Lactiplantibacillus plantarum (Lactobacillus plantarum).